A 429-amino-acid polypeptide reads, in one-letter code: Adenylosuccinate synthetase (429 aa).

GTP-binding positions include G13 to K19 and G41 to T43. D14 serves as the catalytic Proton acceptor. Mg(2+)-binding residues include D14 and G41. Residues D14 to K17, N39 to H42, T130, R144, Q224, T239, and R303 each bind IMP. H42 serves as the catalytic Proton donor. A299–R305 contributes to the substrate binding site. Residues R305, K331–D333, and S412–G414 each bind GTP.

It belongs to the adenylosuccinate synthetase family. As to quaternary structure, homodimer. Mg(2+) is required as a cofactor.

It localises to the cytoplasm. The enzyme catalyses IMP + L-aspartate + GTP = N(6)-(1,2-dicarboxyethyl)-AMP + GDP + phosphate + 2 H(+). It functions in the pathway purine metabolism; AMP biosynthesis via de novo pathway; AMP from IMP: step 1/2. In terms of biological role, plays an important role in the de novo pathway of purine nucleotide biosynthesis. Catalyzes the first committed step in the biosynthesis of AMP from IMP. This chain is Adenylosuccinate synthetase, found in Psychrobacter sp. (strain PRwf-1).